Reading from the N-terminus, the 1183-residue chain is DNA-directed RNA polymerase subunit beta (1183 aa).

The span at 1149–1162 (DNEIEMADVDDEDA) shows a compositional bias: acidic residues. The disordered stretch occupies residues 1149-1183 (DNEIEMADVDDEDATERKVDLQQKDVPETQKETTD). The span at 1163–1183 (TERKVDLQQKDVPETQKETTD) shows a compositional bias: basic and acidic residues.

It belongs to the RNA polymerase beta chain family. In terms of assembly, the RNAP catalytic core consists of 2 alpha, 1 beta, 1 beta' and 1 omega subunit. When a sigma factor is associated with the core the holoenzyme is formed, which can initiate transcription.

It carries out the reaction RNA(n) + a ribonucleoside 5'-triphosphate = RNA(n+1) + diphosphate. Functionally, DNA-dependent RNA polymerase catalyzes the transcription of DNA into RNA using the four ribonucleoside triphosphates as substrates. The polypeptide is DNA-directed RNA polymerase subunit beta (Staphylococcus haemolyticus (strain JCSC1435)).